The following is a 230-amino-acid chain: Ribonuclease 3 (230 aa).

Positions 6 to 135 constitute an RNase III domain; that stretch reads VSELRARYGI…FNGALFLDQG (130 aa). Residue Glu-48 participates in Mg(2+) binding. Asp-52 is an active-site residue. 2 residues coordinate Mg(2+): Asp-121 and Glu-124. Residue Glu-124 is part of the active site. One can recognise a DRBM domain in the interval 161–230; that stretch reads DYKTNLQEFL…AKKALEQLKA (70 aa).

This sequence belongs to the ribonuclease III family. As to quaternary structure, homodimer. The cofactor is Mg(2+).

It is found in the cytoplasm. The enzyme catalyses Endonucleolytic cleavage to 5'-phosphomonoester.. In terms of biological role, digests double-stranded RNA. Involved in the processing of primary rRNA transcript to yield the immediate precursors to the large and small rRNAs (23S and 16S). Processes some mRNAs, and tRNAs when they are encoded in the rRNA operon. Processes pre-crRNA and tracrRNA of type II CRISPR loci if present in the organism. This chain is Ribonuclease 3, found in Latilactobacillus sakei subsp. sakei (strain 23K) (Lactobacillus sakei subsp. sakei).